The following is a 326-amino-acid chain: Phospho-N-acetylmuramoyl-pentapeptide-transferase (326 aa).

Helical transmembrane passes span 3-23 (ISIS…PAFI), 51-71 (TMGG…FALF), 79-99 (VGMI…DDFL), 115-135 (LALQ…GGDI), 138-158 (VFGY…FWLV), 169-189 (GVDG…GVIA), 195-215 (MDIL…FIFN), 221-243 (VFMG…MALH), and 306-326 (FFFW…LYLM).

Belongs to the glycosyltransferase 4 family. MraY subfamily. It depends on Mg(2+) as a cofactor.

The protein resides in the cell membrane. The enzyme catalyses UDP-N-acetyl-alpha-D-muramoyl-L-alanyl-gamma-D-glutamyl-L-lysyl-D-alanyl-D-alanine + di-trans,octa-cis-undecaprenyl phosphate = Mur2Ac(oyl-L-Ala-gamma-D-Glu-L-Lys-D-Ala-D-Ala)-di-trans,octa-cis-undecaprenyl diphosphate + UMP. It functions in the pathway cell wall biogenesis; peptidoglycan biosynthesis. Functionally, catalyzes the initial step of the lipid cycle reactions in the biosynthesis of the cell wall peptidoglycan: transfers peptidoglycan precursor phospho-MurNAc-pentapeptide from UDP-MurNAc-pentapeptide onto the lipid carrier undecaprenyl phosphate, yielding undecaprenyl-pyrophosphoryl-MurNAc-pentapeptide, known as lipid I. This is Phospho-N-acetylmuramoyl-pentapeptide-transferase from Streptococcus pneumoniae serotype 2 (strain D39 / NCTC 7466).